The chain runs to 62 residues: Putative antitoxin AF_1095 (62 aa).

This sequence belongs to the UPF0165 family.

Possibly the antitoxin component of a type II toxin-antitoxin (TA) system. This Archaeoglobus fulgidus (strain ATCC 49558 / DSM 4304 / JCM 9628 / NBRC 100126 / VC-16) protein is Putative antitoxin AF_1095.